A 63-amino-acid chain; its full sequence is uncharacterized protein (63 aa).

This is an uncharacterized protein from Orgyia pseudotsugata (Douglas-fir tussock moth).